The chain runs to 429 residues: CBL-interacting serine/threonine-protein kinase 7 (429 aa).

The Protein kinase domain occupies 25 to 280 (YELGRRLGSG…IETVMKTNWF (256 aa)). ATP contacts are provided by residues 31-39 (LGSGSFAKV) and Lys-54. Residue Asp-149 is the Proton acceptor of the active site. The tract at residues 167-195 (DFGLSALPEHLQNGLLHTACGTPAYTAPE) is activation loop. Ser-171 bears the Phosphoserine mark. A Phosphothreonine modification is found at Thr-184. Residues 302-326 (SSVNSITAFDLISLSSGLDLSGLFE) form the NAF domain. The interval 330-363 (KKERRFTAKVSGVEVEEKAKMIGEKLGYVVKKKM) is PPI.

This sequence belongs to the protein kinase superfamily. CAMK Ser/Thr protein kinase family. SNF1 subfamily. Interacts with CBL1, CBL2 and CBL3. The cofactor is Mn(2+). Post-translationally, autophosphorylated. In terms of tissue distribution, strongly expressed in leaves, but barely expressed in roots, stems or flowers.

The catalysed reaction is L-seryl-[protein] + ATP = O-phospho-L-seryl-[protein] + ADP + H(+). It catalyses the reaction L-threonyl-[protein] + ATP = O-phospho-L-threonyl-[protein] + ADP + H(+). Functionally, CIPK serine-threonine protein kinases interact with CBL proteins. Binding of a CBL protein to the regulatory NAF domain of CIPK protein lead to the activation of the kinase in a calcium-dependent manner. Phosphorylates the rice sucrose synthase (SuSy) in vitro in an allosteric manner. Involved in cold response. The sequence is that of CBL-interacting serine/threonine-protein kinase 7 (CIPK7) from Arabidopsis thaliana (Mouse-ear cress).